The following is a 487-amino-acid chain: Serralysin (487 aa).

The propeptide occupies 1–16; sequence MQSTKKAIEITESNFA. His-192 is a binding site for Zn(2+). Glu-193 is a catalytic residue. Residues His-196, His-202, and Tyr-232 each contribute to the Zn(2+) site. Ca(2+)-binding residues include Arg-269, Gly-271, Thr-273, Asp-301, Gly-303, Gly-304, Asp-306, Thr-343, Glu-345, Gly-350, Gly-352, Asp-354, Asn-359, Ala-361, Asn-363, Gly-367, Gly-368, Ala-369, Asp-372, Gly-376, Gly-377, Gly-378, Gly-379, Asp-381, Gly-385, Gly-386, Ala-387, Gly-388, Asp-390, Asp-399, Asp-406, and Asp-416. Hemolysin-type calcium-binding repeat units follow at residues 348–365 and 366–383; these read IGGS…NNVL and KGGA…ADEL.

This sequence belongs to the peptidase M10B family. The cofactor is Ca(2+). Requires Zn(2+) as cofactor.

The protein resides in the secreted. It carries out the reaction Preferential cleavage of bonds with hydrophobic residues in P1'.. Functionally, naturally present in the silkworm intestine and allows the emerging moth to dissolve its cocoon. The sequence is that of Serralysin from Serratia marcescens (strain ATCC 21074 / E-15).